Reading from the N-terminus, the 514-residue chain is UDP-N-acetylmuramoyl-L-alanyl-D-glutamate--2,6-diaminopimelate ligase (514 aa).

Thr37 provides a ligand contact to UDP-N-acetyl-alpha-D-muramoyl-L-alanyl-D-glutamate. 125 to 131 (GTNGKTS) contacts ATP. UDP-N-acetyl-alpha-D-muramoyl-L-alanyl-D-glutamate-binding positions include 167–168 (TT), Ser194, Gln200, and Arg202. Lys234 carries the post-translational modification N6-carboxylysine. Meso-2,6-diaminopimelate-binding positions include Arg406, 430–433 (DNPR), Gly481, and Glu485. The Meso-diaminopimelate recognition motif signature appears at 430 to 433 (DNPR).

This sequence belongs to the MurCDEF family. MurE subfamily. Mg(2+) is required as a cofactor. Post-translationally, carboxylation is probably crucial for Mg(2+) binding and, consequently, for the gamma-phosphate positioning of ATP.

It localises to the cytoplasm. It carries out the reaction UDP-N-acetyl-alpha-D-muramoyl-L-alanyl-D-glutamate + meso-2,6-diaminopimelate + ATP = UDP-N-acetyl-alpha-D-muramoyl-L-alanyl-gamma-D-glutamyl-meso-2,6-diaminopimelate + ADP + phosphate + H(+). It participates in cell wall biogenesis; peptidoglycan biosynthesis. Its function is as follows. Catalyzes the addition of meso-diaminopimelic acid to the nucleotide precursor UDP-N-acetylmuramoyl-L-alanyl-D-glutamate (UMAG) in the biosynthesis of bacterial cell-wall peptidoglycan. This chain is UDP-N-acetylmuramoyl-L-alanyl-D-glutamate--2,6-diaminopimelate ligase, found in Ralstonia nicotianae (strain ATCC BAA-1114 / GMI1000) (Ralstonia solanacearum).